The primary structure comprises 494 residues: Guanosine-5'-triphosphate,3'-diphosphate pyrophosphatase (494 aa).

It belongs to the GppA/Ppx family. GppA subfamily.

It catalyses the reaction guanosine 3'-diphosphate 5'-triphosphate + H2O = guanosine 3',5'-bis(diphosphate) + phosphate + H(+). It functions in the pathway purine metabolism; ppGpp biosynthesis; ppGpp from GTP: step 2/2. In terms of biological role, catalyzes the conversion of pppGpp to ppGpp. Guanosine pentaphosphate (pppGpp) is a cytoplasmic signaling molecule which together with ppGpp controls the 'stringent response', an adaptive process that allows bacteria to respond to amino acid starvation, resulting in the coordinated regulation of numerous cellular activities. This chain is Guanosine-5'-triphosphate,3'-diphosphate pyrophosphatase, found in Shigella sonnei (strain Ss046).